Reading from the N-terminus, the 365-residue chain is Aminomethyltransferase (365 aa).

It belongs to the GcvT family. As to quaternary structure, the glycine cleavage system is composed of four proteins: P, T, L and H.

The enzyme catalyses N(6)-[(R)-S(8)-aminomethyldihydrolipoyl]-L-lysyl-[protein] + (6S)-5,6,7,8-tetrahydrofolate = N(6)-[(R)-dihydrolipoyl]-L-lysyl-[protein] + (6R)-5,10-methylene-5,6,7,8-tetrahydrofolate + NH4(+). Its function is as follows. The glycine cleavage system catalyzes the degradation of glycine. The chain is Aminomethyltransferase from Chlorobium phaeobacteroides (strain DSM 266 / SMG 266 / 2430).